The chain runs to 485 residues: Regulatory protein ViaA (485 aa).

This sequence belongs to the ViaA family. As to quaternary structure, homodimer. Interacts with RavA.

It localises to the cytoplasm. In terms of biological role, component of the RavA-ViaA chaperone complex, which may act on the membrane to optimize the function of some of the respiratory chains. ViaA stimulates the ATPase activity of RavA. The sequence is that of Regulatory protein ViaA from Proteus mirabilis (strain HI4320).